Consider the following 217-residue polypeptide: MSFRGGGRGGFNRGGGGGGFNRGGSSNHFRGGGGGGGGGNFRGGGRGGFGRGGGRGGFNKGQDQGPPERVVLLGEFLHPCEDDIVCKCTTDENKVPYFNAPVYLENKEQIGKVDEIFGQLRDFYFSVKLSENMKASSFKKLQKFYIDPYKLLPLQRFLPRPPGEKGPPRGGGRGGRGGGRGGGGRGGGRGGGFRGGRGGGGGGFRGGRGGGFRGRGH.

2 stretches are compositionally biased toward gly residues: residues 1-22 and 30-59; these read MSFR…GFNR and RGGG…GGFN. The segment at 1–65 is disordered; sequence MSFRGGGRGG…GGFNKGQDQG (65 aa). The segment at 4–57 is RGG-box 1; it reads RGGGRGGFNRGGGGGGFNRGGSSNHFRGGGGGGGGGNFRGGGRGGFGRGGGRGG. Lysine 134 is covalently cross-linked (Glycyl lysine isopeptide (Lys-Gly) (interchain with G-Cter in SUMO2)). The interval 156–217 is disordered; that stretch reads RFLPRPPGEK…RGGGFRGRGH (62 aa). A compositionally biased stretch (gly residues) spans 168–217; sequence PRGGGRGGRGGGRGGGGRGGGRGGGFRGGRGGGGGGFRGGRGGGFRGRGH. An RGG-box 2 region spans residues 169–217; sequence RGGGRGGRGGGRGGGGRGGGRGGGFRGGRGGGGGGFRGGRGGGFRGRGH.

This sequence belongs to the GAR1 family. Part of the H/ACA small nucleolar ribonucleoprotein (H/ACA snoRNP) complex, which contains NHP2/NOLA2, GAR1/NOLA1, NOP10/NOLA3, and DKC1/NOLA4, which is presumed to be the catalytic subunit. The complex contains a stable core formed by binding of one or two NOP10-DKC1 heterodimers to NHP2; GAR1 subsequently binds to this core via DKC1. The complex binds a box H/ACA small nucleolar RNA (snoRNA), which may target the specific site of modification within the RNA substrate. The complex also interacts with TERC, which contains a 3'-terminal domain related to the box H/ACA snoRNAs. Specific interactions with snoRNAs or TERC are mediated by GAR1 and NHP2. Associates with NOLC1/NOPP140. H/ACA snoRNPs interact with the SMN complex, consisting of SMN1 or SMN2, GEMIN2/SIP1, DDX20/GEMIN3, and GEMIN4. This is mediated by interaction between GAR1 and SMN1 or SMN2. The SMN complex may be required for correct assembly of the H/ACA snoRNP complex. Component of the telomerase holoenzyme complex composed of one molecule of TERT, one molecule of WRAP53/TCAB1, two molecules of H/ACA ribonucleoprotein complex subunits DKC1, NOP10, NHP2 and GAR1, and a telomerase RNA template component (TERC). The telomerase holoenzyme complex is associated with TEP1, SMG6/EST1A and POT1.

The protein resides in the nucleus. It localises to the nucleolus. It is found in the cajal body. Its function is as follows. Required for ribosome biogenesis and telomere maintenance. Part of the H/ACA small nucleolar ribonucleoprotein (H/ACA snoRNP) complex, which catalyzes pseudouridylation of rRNA. This involves the isomerization of uridine such that the ribose is subsequently attached to C5, instead of the normal N1. Each rRNA can contain up to 100 pseudouridine ('psi') residues, which may serve to stabilize the conformation of rRNAs. May also be required for correct processing or intranuclear trafficking of TERC, the RNA component of the telomerase reverse transcriptase (TERT) holoenzyme. This Homo sapiens (Human) protein is H/ACA ribonucleoprotein complex subunit 1 (GAR1).